The following is a 175-amino-acid chain: Small ribosomal subunit protein uS5 (175 aa).

The S5 DRBM domain occupies 11 to 74 (LSEVLVDVNR…QAAKKRMMKV (64 aa)).

It belongs to the universal ribosomal protein uS5 family. In terms of assembly, part of the 30S ribosomal subunit. Contacts proteins S4 and S8.

Its function is as follows. With S4 and S12 plays an important role in translational accuracy. Located at the back of the 30S subunit body where it stabilizes the conformation of the head with respect to the body. The polypeptide is Small ribosomal subunit protein uS5 (Rickettsia prowazekii (strain Madrid E)).